Reading from the N-terminus, the 514-residue chain is Putative exoglucanase type C (514 aa).

Positions 1 to 17 are cleaved as a signal peptide; the sequence is MYRIVATASALIAAARA. The tract at residues 18-439 is catalytic; it reads QQVCSLNTET…RDVPNSKVSF (422 aa). Glu-229 functions as the Nucleophile in the catalytic mechanism. The active-site Proton donor is the Glu-234. N-linked (GlcNAc...) asparagine glycosylation is present at Asn-287. Polar residues predominate over residues 408–424; it reads STKVGSQRGSCATTSGK. 2 disordered regions span residues 408–433 and 448–485; these read STKV…RDVP and GSTY…QWGQ. The segment at 440–482 is linker; it reads SNIKFGPIGSTYKSDGTTPNPPASSSTTGSSTPTNPPAGSVDQ. The segment covering 462–479 has biased composition (low complexity); it reads ASSSTTGSSTPTNPPAGS. The CBM1 domain maps to 478–514; sequence GSVDQWGQCGGQNYSGPTTCKSPFTCKKINDFYSQCQ. 2 cysteine pairs are disulfide-bonded: Cys-486-Cys-503 and Cys-497-Cys-513. The N-linked (GlcNAc...) asparagine glycan is linked to Asn-490.

The protein belongs to the glycosyl hydrolase 7 (cellulase C) family.

It catalyses the reaction Hydrolysis of (1-&gt;4)-beta-D-glucosidic linkages in cellulose and cellotetraose, releasing cellobiose from the non-reducing ends of the chains.. The polypeptide is Putative exoglucanase type C (Fusarium oxysporum (Fusarium vascular wilt)).